The following is a 129-amino-acid chain: NADH-quinone oxidoreductase subunit A (129 aa).

Transmembrane regions (helical) follow at residues 6–26 (FWPFILYAGMVLVLVALIVGF), 63–83 (LVAVLFVIFDMEAAFIFAWAV), and 89–109 (GWIGYGGALAFITILGVALIY).

This sequence belongs to the complex I subunit 3 family. In terms of assembly, NDH-1 is composed of 14 different subunits. Subunits NuoA, H, J, K, L, M, N constitute the membrane sector of the complex.

The protein resides in the cell inner membrane. The catalysed reaction is a quinone + NADH + 5 H(+)(in) = a quinol + NAD(+) + 4 H(+)(out). In terms of biological role, NDH-1 shuttles electrons from NADH, via FMN and iron-sulfur (Fe-S) centers, to quinones in the respiratory chain. The immediate electron acceptor for the enzyme in this species is believed to be ubiquinone. Couples the redox reaction to proton translocation (for every two electrons transferred, four hydrogen ions are translocated across the cytoplasmic membrane), and thus conserves the redox energy in a proton gradient. The polypeptide is NADH-quinone oxidoreductase subunit A (Nitrosococcus oceani (strain ATCC 19707 / BCRC 17464 / JCM 30415 / NCIMB 11848 / C-107)).